Reading from the N-terminus, the 152-residue chain is Prostaglandin E synthase (152 aa).

Over 1–12 (MPAHSLAMSSPA) the chain is Lumenal. The chain crosses the membrane as a helical span at residues 13-41 (LPAFLLCSTLLVIKMYVVAIITGQVRLRK). Arg38 contributes to the glutathione binding site. Topologically, residues 42 to 60 (KAFANPEDALRHGGPQYCR) are cytoplasmic. The helical transmembrane segment at 61 to 90 (SDPDVERCLRAHRNDMETIYPFLFLGFVYS) threads the bilayer. 73-77 (RNDME) serves as a coordination point for glutathione. Residues 91-95 (FLGPN) are Lumenal-facing. A helical membrane pass occupies residues 96-119 (PFVAWMHFLVFLLGRVVHTVAYLG). Residues His113 and Tyr117 each coordinate glutathione. Residues 120–123 (KLRA) are Cytoplasmic-facing. Residues 124–152 (PIRSVTYTLAQLPCASMALQILWEAARHL) traverse the membrane as a helical segment. 126–130 (RSVTY) provides a ligand contact to glutathione.

This sequence belongs to the MAPEG family. In terms of assembly, homotrimer. It depends on glutathione as a cofactor.

It localises to the membrane. It is found in the cytoplasm. Its subcellular location is the perinuclear region. The catalysed reaction is prostaglandin H2 = prostaglandin E2. The enzyme catalyses 2-glyceryl-prostaglandin H2 = 2-glyceryl-prostaglandin E2. It carries out the reaction prostaglandin G2 = (15S)-15-hydroperoxy-prostaglandin E2. It catalyses the reaction 1-chloro-2,4-dinitrobenzene + glutathione = 2,4-dinitrophenyl-S-glutathione + chloride + H(+). The catalysed reaction is (5S)-hydroperoxy-(6E,8Z,11Z,14Z)-eicosatetraenoate + 2 glutathione = (5S)-hydroxy-(6E,8Z,11Z,14Z)-eicosatetraenoate + glutathione disulfide + H2O. Its pathway is lipid metabolism; prostaglandin biosynthesis. Its function is as follows. Terminal enzyme of the cyclooxygenase (COX)-2-mediated prostaglandin E2 (PGE2) biosynthetic pathway. Catalyzes the glutathione-dependent oxidoreduction of prostaglandin endoperoxide H2 (PGH2) to prostaglandin E2 (PGE2) in response to inflammatory stimuli. Plays a key role in inflammation response, fever and pain. Also catalyzes the oxidoreduction of endocannabinoids into prostaglandin glycerol esters and PGG2 into 15-hydroperoxy-PGE2. In addition, displays low glutathione transferase and glutathione-dependent peroxidase activities, toward 1-chloro-2,4-dinitrobenzene and 5-hydroperoxyicosatetraenoic acid (5-HPETE), respectively. This is Prostaglandin E synthase (PTGES) from Macaca fascicularis (Crab-eating macaque).